A 475-amino-acid polypeptide reads, in one-letter code: Probable dolichyl pyrophosphate Man9GlcNAc2 alpha-1,3-glucosyltransferase (475 aa).

The next 8 helical transmembrane spans lie at 114 to 133, 161 to 181, 235 to 255, 296 to 316, 322 to 342, 385 to 405, 418 to 438, and 441 to 461; these read VVSA…AYSL, GHFQ…AAIL, AVVL…LQAV, MALV…VLLF, VGFL…SFQV, LLVP…CFDS, IANI…TVPA, and KYPD…FFLF.

This sequence belongs to the ALG6/ALG8 glucosyltransferase family.

The protein localises to the endoplasmic reticulum membrane. It catalyses the reaction an alpha-D-Man-(1-&gt;2)-alpha-D-Man-(1-&gt;2)-alpha-D-Man-(1-&gt;3)-[alpha-D-Man-(1-&gt;2)-alpha-D-Man-(1-&gt;3)-[alpha-D-Man-(1-&gt;2)-alpha-D-Man-(1-&gt;6)]-alpha-D-Man-(1-&gt;6)]-beta-D-Man-(1-&gt;4)-beta-D-GlcNAc-(1-&gt;4)-alpha-D-GlcNAc-diphospho-di-trans,poly-cis-dolichol + a di-trans,poly-cis-dolichyl beta-D-glucosyl phosphate = an alpha-D-Glc-(1-&gt;3)-alpha-D-Man-(1-&gt;2)-alpha-D-Man-(1-&gt;2)-alpha-D-Man-(1-&gt;3)-[alpha-D-Man-(1-&gt;2)-alpha-D-Man-(1-&gt;3)-[alpha-D-Man-(1-&gt;2)-alpha-D-Man-(1-&gt;6)]-alpha-D-Man-(1-&gt;6)]-beta-D-Man-(1-&gt;4)-beta-D-GlcNAc-(1-&gt;4)-alpha-D-GlcNAc-diphospho-di-trans,poly-cis-dolichol + a di-trans,poly-cis-dolichyl phosphate + H(+). It participates in protein modification; protein glycosylation. Adds the first glucose residue to the lipid-linked oligosaccharide precursor for N-linked glycosylation. Transfers glucose from dolichyl phosphate glucose (Dol-P-Glc) onto the lipid-linked oligosaccharide Man(9)GlcNAc(2)-PP-Dol. Involved in cuticle differentiation. The sequence is that of Probable dolichyl pyrophosphate Man9GlcNAc2 alpha-1,3-glucosyltransferase (gny) from Drosophila melanogaster (Fruit fly).